Reading from the N-terminus, the 93-residue chain is Large ribosomal subunit protein bL36m (93 aa).

Residues 1–35 constitute a mitochondrion transit peptide; that stretch reads MFLQTLRLTMPRMFLHMKPSPITITRACTVPSLLS.

This sequence belongs to the bacterial ribosomal protein bL36 family. Component of the mitochondrial large ribosomal subunit (mt-LSU). Mature yeast 74S mitochondrial ribosomes consist of a small (37S) and a large (54S) subunit. The 37S small subunit contains a 15S ribosomal RNA (15S mt-rRNA) and 34 different proteins. The 54S large subunit contains a 21S rRNA (21S mt-rRNA) and 46 different proteins. bL36m has a zinc binding site.

It is found in the mitochondrion. Functionally, component of the mitochondrial ribosome (mitoribosome), a dedicated translation machinery responsible for the synthesis of mitochondrial genome-encoded proteins, including at least some of the essential transmembrane subunits of the mitochondrial respiratory chain. The mitoribosomes are attached to the mitochondrial inner membrane and translation products are cotranslationally integrated into the membrane. bL36m may be involved in a process influencing telomere capping. This Saccharomyces cerevisiae (strain ATCC 204508 / S288c) (Baker's yeast) protein is Large ribosomal subunit protein bL36m (RTC6).